The primary structure comprises 156 residues: 6,7-dimethyl-8-ribityllumazine synthase (156 aa).

5-amino-6-(D-ribitylamino)uracil is bound by residues W22, 56–58, and 80–82; these read AYE and AVI. 85–86 is a (2S)-2-hydroxy-3-oxobutyl phosphate binding site; sequence DT. H88 functions as the Proton donor in the catalytic mechanism. 5-amino-6-(D-ribitylamino)uracil is bound at residue F113. R127 is a binding site for (2S)-2-hydroxy-3-oxobutyl phosphate.

The protein belongs to the DMRL synthase family.

It carries out the reaction (2S)-2-hydroxy-3-oxobutyl phosphate + 5-amino-6-(D-ribitylamino)uracil = 6,7-dimethyl-8-(1-D-ribityl)lumazine + phosphate + 2 H2O + H(+). It participates in cofactor biosynthesis; riboflavin biosynthesis; riboflavin from 2-hydroxy-3-oxobutyl phosphate and 5-amino-6-(D-ribitylamino)uracil: step 1/2. Catalyzes the formation of 6,7-dimethyl-8-ribityllumazine by condensation of 5-amino-6-(D-ribitylamino)uracil with 3,4-dihydroxy-2-butanone 4-phosphate. This is the penultimate step in the biosynthesis of riboflavin. The sequence is that of 6,7-dimethyl-8-ribityllumazine synthase from Deinococcus deserti (strain DSM 17065 / CIP 109153 / LMG 22923 / VCD115).